We begin with the raw amino-acid sequence, 1207 residues long: DNA-directed RNA polymerase subunit beta' (1207 aa).

4 residues coordinate Zn(2+): Cys-60, Cys-62, Cys-75, and Cys-78. Mg(2+)-binding residues include Asp-449, Asp-451, and Asp-453. Cys-822, Cys-896, Cys-903, and Cys-906 together coordinate Zn(2+).

Belongs to the RNA polymerase beta' chain family. The RNAP catalytic core consists of 2 alpha, 1 beta, 1 beta' and 1 omega subunit. When a sigma factor is associated with the core the holoenzyme is formed, which can initiate transcription. It depends on Mg(2+) as a cofactor. Zn(2+) is required as a cofactor.

The enzyme catalyses RNA(n) + a ribonucleoside 5'-triphosphate = RNA(n+1) + diphosphate. In terms of biological role, DNA-dependent RNA polymerase catalyzes the transcription of DNA into RNA using the four ribonucleoside triphosphates as substrates. The sequence is that of DNA-directed RNA polymerase subunit beta' from Staphylococcus aureus (strain USA300).